The sequence spans 433 residues: Probable beta-1,3-galactosyl-O-glycosyl-glycoprotein beta-1,6-N-acetylglucosaminyltransferase 7 (433 aa).

The Cytoplasmic portion of the chain corresponds to 1-8 (MSQLRTTK). A helical; Signal-anchor for type II membrane protein membrane pass occupies residues 9–25 (AGLVACGMICAFIFLYL). At 26–433 (RNPGPEEAEA…QSHFNSQPHH (408 aa)) the chain is on the extracellular side. 4 disulfide bridges follow: cysteine 57-cysteine 209, cysteine 143-cysteine 358, cysteine 164-cysteine 191, and cysteine 367-cysteine 398. N-linked (GlcNAc...) asparagine glycosylation is present at asparagine 112. A disordered region spans residues 233–275 (NITPGVTPPANSKPKTGQGPPKPSPDENSYTAPNTIFKQSPPH). The span at 258 to 275 (DENSYTAPNTIFKQSPPH) shows a compositional bias: polar residues. The tract at residues 413–433 (VPPEPHWQFPQQSHFNSQPHH) is disordered. The span at 421–433 (FPQQSHFNSQPHH) shows a compositional bias: polar residues.

This sequence belongs to the glycosyltransferase 14 family.

The protein localises to the golgi apparatus membrane. It participates in protein modification; protein glycosylation. Functionally, probable glycosyltransferase. The polypeptide is Probable beta-1,3-galactosyl-O-glycosyl-glycoprotein beta-1,6-N-acetylglucosaminyltransferase 7 (Mus musculus (Mouse)).